Consider the following 777-residue polypeptide: MTVATEKTPHKSSSMFKLFSNKLRGNNDSTPAAAPAPVPTKKLTKAHTSAHISRSASTNTPHPLRNGVTGIPSASPAPRQMTRRSTGVTPTMVKSSKQLSTLTAHNSNPFRNKNGTISSASHTHNGPTNSQHMVYNPYGINNRPTETQSSVRGSSYSRHGSGSHISSGSASSTNNNTDLSFYMHDGDNKIRMLPLPIADPNEFLPDDIKQVSIHLSDNFSFDKDNKTIGSGGSSEVRIVRSNYRSKDVYALKKLNMIYDETPEKFYKRCSKEFIIAKQLSNNIHITSTFYLVKVPTTIYTTRGWGFIMELGSKDLFQLMEKSGWKNVPLHEKFCLFKQVAQGVKFCHDNGIAHRDLKPENVLLSKDGVCKLTDFGISDWYHKENEDGTIEVKQNAGMIGSPPYAPPEVMYWDAKKKYPTSMQKPYDPLKLDCYSLGIIFITLINNIIPFFESCNMDPKFREYENSYNNFIRYQNKNFRQKGTYKPGPGSEYMLARRFKNADASRVAWRLADPDPETRYTMEDLFNDPWFQSVETCVDVNDVNLVRHPQIKKTSSEGINLVNAADAHPIPSPMVGTDTNGGLHSDSENPAGTHTTEESVETPKPASIRELHKPRSMVDIAESPMKKAATTPLFTLDEEAKEERDHEQETNTTAEADNEKAQTVPTSAVDTNEFASKENATTTDNDNVNTKATTADPTTQQGAEITETGSIAGSISASISASITASMSGSVSGAATAPIPRRDPSNRSIHSNATSTGTAGRKKKVVHHHMEVPGSAFQI.

Positions 21-174 (NKLRGNNDST…ISSGSASSTN (154 aa)) are disordered. The span at 30 to 41 (TPAAAPAPVPTK) shows a compositional bias: low complexity. Composition is skewed to polar residues over residues 50–61 (AHISRSASTNTP) and 83–133 (RRST…SQHM). Positions 149 to 172 (SSVRGSSYSRHGSGSHISSGSASS) are enriched in low complexity. Residues 222-529 (DKDNKTIGSG…MEDLFNDPWF (308 aa)) form the Protein kinase domain. ATP-binding positions include 228 to 236 (IGSGGSSEV) and lysine 252. Catalysis depends on aspartate 355, which acts as the Proton acceptor. Disordered stretches follow at residues 564–705 (DAHP…EITE) and 728–764 (SVSGAATAPIPRRDPSNRSIHSNATSTGTAGRKKKVV). Polar residues-rich tracts occupy residues 575–592 (TDTNGGLHSDSENPAGTH) and 648–672 (TNTTAEADNEKAQTVPTSAVDTNEF). Residues 677-694 (NATTTDNDNVNTKATTAD) show a composition bias toward low complexity. The segment covering 744–756 (NRSIHSNATSTGT) has biased composition (polar residues).

It belongs to the protein kinase superfamily. Ser/Thr protein kinase family.

The catalysed reaction is L-seryl-[protein] + ATP = O-phospho-L-seryl-[protein] + ADP + H(+). The enzyme catalyses L-threonyl-[protein] + ATP = O-phospho-L-threonyl-[protein] + ADP + H(+). This Candida glabrata (strain ATCC 2001 / BCRC 20586 / JCM 3761 / NBRC 0622 / NRRL Y-65 / CBS 138) (Yeast) protein is Serine/threonine-protein kinase PTK2 (PTK2).